Consider the following 60-residue polypeptide: Large ribosomal subunit protein uL30 (60 aa).

Belongs to the universal ribosomal protein uL30 family. As to quaternary structure, part of the 50S ribosomal subunit.

The polypeptide is Large ribosomal subunit protein uL30 (Staphylococcus epidermidis (strain ATCC 35984 / DSM 28319 / BCRC 17069 / CCUG 31568 / BM 3577 / RP62A)).